Here is a 576-residue protein sequence, read N- to C-terminus: FtsZ-localized protein C (576 aa).

In terms of assembly, interacts with FtsZ filaments.

It is found in the cytoplasm. Its subcellular location is the cell inner membrane. Functionally, membrane anchor for FtsZ. Binds and recruits FtsZ polymers to membranes early in the cell cycle. May also improve the efficiency of cytokinesis through the regulation of cell wall hydrolysis. In Caulobacter vibrioides (strain NA1000 / CB15N) (Caulobacter crescentus), this protein is FtsZ-localized protein C.